A 210-amino-acid polypeptide reads, in one-letter code: Large ribosomal subunit protein bL25 (210 aa).

Positions 179-210 (LPPQQEEEIHSGEQQEPGQPEAEEGRETTPEG) are disordered. Positions 201 to 210 (EEGRETTPEG) are enriched in basic and acidic residues.

It belongs to the bacterial ribosomal protein bL25 family. CTC subfamily. Part of the 50S ribosomal subunit; part of the 5S rRNA/L5/L18/L25 subcomplex. Contacts the 5S rRNA. Binds to the 5S rRNA independently of L5 and L18.

This is one of the proteins that binds to the 5S RNA in the ribosome where it forms part of the central protuberance. This Geobacillus thermodenitrificans (strain NG80-2) protein is Large ribosomal subunit protein bL25.